The sequence spans 1603 residues: Vitellogenin-3 (1603 aa).

Positions 1–15 (MKSIIIASLVALAIA) are cleaved as a signal peptide. A Vitellogenin domain is found at 24–685 (FSPKSEYVYK…EKNAFLPKEV (662 aa)). An N-linked (GlcNAc...) asparagine glycan is attached at asparagine 1266. The 170-residue stretch at 1306 to 1475 (ATCKVGQSEV…SYLLKNEECE (170 aa)) folds into the VWFD domain. 2 disulfides stabilise this stretch: cysteine 1308-cysteine 1438 and cysteine 1330-cysteine 1474.

As to expression, expressed in the intestine of adult hermaphrodites.

Its subcellular location is the secreted. Precursor of the egg-yolk proteins that are sources of nutrients during embryonic development. Together with other vitellogenins, may play a role in modulating life-span, acting via induction of autophagy and lysosomal lipolysis. This chain is Vitellogenin-3 (vit-3), found in Caenorhabditis elegans.